The sequence spans 141 residues: MAKKVENIVKLQIPAGKATPAPPVGPALGQAGINIMGFTKEFNARTADQAGMIIPVVISVYEDKSFDFITKTPPAAVLLKKAAGVEKGSGTPNSVKVASVTRAQVREIAETKMPDLNAANIESAMRMIEGTARSMGFTVTD.

The protein belongs to the universal ribosomal protein uL11 family. As to quaternary structure, part of the ribosomal stalk of the 50S ribosomal subunit. Interacts with L10 and the large rRNA to form the base of the stalk. L10 forms an elongated spine to which L12 dimers bind in a sequential fashion forming a multimeric L10(L12)X complex. Post-translationally, one or more lysine residues are methylated.

In terms of biological role, forms part of the ribosomal stalk which helps the ribosome interact with GTP-bound translation factors. This is Large ribosomal subunit protein uL11 from Streptococcus thermophilus (strain CNRZ 1066).